Reading from the N-terminus, the 248-residue chain is Triosephosphate isomerase (248 aa).

Residue 9–11 (NWK) coordinates substrate. His94 (electrophile) is an active-site residue. The active-site Proton acceptor is the Glu166. Substrate contacts are provided by residues Gly172, Ser212, and 233–234 (GG).

This sequence belongs to the triosephosphate isomerase family. Homodimer.

Its subcellular location is the cytoplasm. It carries out the reaction D-glyceraldehyde 3-phosphate = dihydroxyacetone phosphate. Its pathway is carbohydrate biosynthesis; gluconeogenesis. It participates in carbohydrate degradation; glycolysis; D-glyceraldehyde 3-phosphate from glycerone phosphate: step 1/1. Involved in the gluconeogenesis. Catalyzes stereospecifically the conversion of dihydroxyacetone phosphate (DHAP) to D-glyceraldehyde-3-phosphate (G3P). In Clostridium botulinum (strain ATCC 19397 / Type A), this protein is Triosephosphate isomerase.